The chain runs to 346 residues: Quinolinate synthase (346 aa).

His47 and Ser68 together coordinate iminosuccinate. Cys113 contacts [4Fe-4S] cluster. Iminosuccinate contacts are provided by residues 139–141 (YAN) and Ser156. A [4Fe-4S] cluster-binding site is contributed by Cys200. Residues 226-228 (HPE) and Thr243 each bind iminosuccinate. Cys297 is a binding site for [4Fe-4S] cluster.

The protein belongs to the quinolinate synthase family. Type 1 subfamily. [4Fe-4S] cluster serves as cofactor.

Its subcellular location is the cytoplasm. The enzyme catalyses iminosuccinate + dihydroxyacetone phosphate = quinolinate + phosphate + 2 H2O + H(+). It participates in cofactor biosynthesis; NAD(+) biosynthesis; quinolinate from iminoaspartate: step 1/1. In terms of biological role, catalyzes the condensation of iminoaspartate with dihydroxyacetone phosphate to form quinolinate. This is Quinolinate synthase from Pseudoalteromonas translucida (strain TAC 125).